The following is a 378-amino-acid chain: Chorismate synthase (378 aa).

An NADP(+)-binding site is contributed by Arg49. Residues 126–128 (RAS), Gly287, 302–306 (KPTAT), and Arg328 each bind FMN.

The protein belongs to the chorismate synthase family. In terms of assembly, homotetramer. FMNH2 is required as a cofactor.

It carries out the reaction 5-O-(1-carboxyvinyl)-3-phosphoshikimate = chorismate + phosphate. It participates in metabolic intermediate biosynthesis; chorismate biosynthesis; chorismate from D-erythrose 4-phosphate and phosphoenolpyruvate: step 7/7. Its function is as follows. Catalyzes the anti-1,4-elimination of the C-3 phosphate and the C-6 proR hydrogen from 5-enolpyruvylshikimate-3-phosphate (EPSP) to yield chorismate, which is the branch point compound that serves as the starting substrate for the three terminal pathways of aromatic amino acid biosynthesis. This reaction introduces a second double bond into the aromatic ring system. The polypeptide is Chorismate synthase (Synechococcus sp. (strain JA-3-3Ab) (Cyanobacteria bacterium Yellowstone A-Prime)).